The primary structure comprises 291 residues: Oxidative stress-responsive serine-rich protein 1 (291 aa).

Positions 29-139 are disordered; it reads ISLSVGEGPS…NAGENSTSLD (111 aa). The segment covering 65 to 83 has biased composition (basic residues); sequence STRKSSRGAVRTQRRRRSK. The span at 95 to 105 shows a compositional bias: polar residues; that stretch reads CSTTAPPSSSQ. Residue T143 is modified to Phosphothreonine.

The polypeptide is Oxidative stress-responsive serine-rich protein 1 (Oser1) (Mus musculus (Mouse)).